A 110-amino-acid chain; its full sequence is Cyclin-dependent protein kinase inhibitor SMR8 (110 aa).

Interacts with CDKA-1 and D-type cyclins. In terms of tissue distribution, expressed in the root vascular tissue.

Probable cyclin-dependent protein kinase (CDK) inhibitor that functions as a repressor of mitosis in the endoreduplication cell cycle. This Arabidopsis thaliana (Mouse-ear cress) protein is Cyclin-dependent protein kinase inhibitor SMR8.